A 598-amino-acid chain; its full sequence is Acetylcholine receptor subunit alpha-type acr-5 (598 aa).

The N-terminal stretch at 1-16 is a signal peptide; that stretch reads MLPNIILILLIRYCSC. Residues 17–323 lie on the Extracellular side of the membrane; it reads GAGSRVYEKY…HLVIRRKPLY (307 aa). Residues asparagine 54, asparagine 71, asparagine 77, asparagine 134, asparagine 178, and asparagine 252 are each glycosylated (N-linked (GlcNAc...) asparagine). The chain crosses the membrane as a helical span at residues 324 to 344; sequence YMINLVVPTSIITIVAVTGFF. Over 345–356 the chain is Cytoplasmic; it reads TPTSSSSERDEK. The chain crosses the membrane as a helical span at residues 357–377; that stretch reads LYLGINTLLTMSVMMLMVCNQ. Over 378 to 391 the chain is Extracellular; sequence MPSTSTYVPLMSWY. A helical membrane pass occupies residues 392-412; that stretch reads YIGIIMVIVVGTFLATGVLAI. The Cytoplasmic segment spans residues 413-563; that stretch reads HGQKHYNKPI…WEFLANVLDR (151 aa). A helical transmembrane segment spans residues 564–584; the sequence is ILLTIFCGFTFAVFIILIGFD. The Extracellular portion of the chain corresponds to 585 to 598; the sequence is SFFTFHTDSPPKTM.

It belongs to the ligand-gated ion channel (TC 1.A.9) family. Acetylcholine receptor (TC 1.A.9.1) subfamily.

Its subcellular location is the postsynaptic cell membrane. It localises to the cell membrane. In terms of biological role, subunit of nicotinic acetylcholine receptor (nAChR). Involved in nAChR sensitivity to nicotine. Modulates locomotion towards the drug nicotine. The protein is Acetylcholine receptor subunit alpha-type acr-5 of Caenorhabditis elegans.